The sequence spans 82 residues: Protein MGF 110-5L (82 aa).

The first 28 residues, 1-28 (MLVIFLGILGLLANQVSSQLVGQLHPTE), serve as a signal peptide directing secretion. The N-linked (GlcNAc...) asparagine; by host glycan is linked to asparagine 62.

Belongs to the asfivirus MGF 110 family.

Plays a role in virus cell tropism, and may be required for efficient virus replication in macrophages. The chain is Protein MGF 110-5L from Ornithodoros (relapsing fever ticks).